A 312-amino-acid chain; its full sequence is Pre-mRNA-splicing factor 38A (312 aa).

The interval 1–179 (MANRTVKDAH…VLEEAEQLEP (179 aa)) is N-terminal protein interaction domain. Phosphoserine occurs at positions 11, 193, 194, 209, and 226. Residues 170-204 (VLEEAEQLEPRVSALEEDMDDVESSEEEEEEDEKL) are a coiled coil. Residues 181–312 (VSALEEDMDD…SHKKSRRGNE (132 aa)) are disordered. Over residues 184 to 202 (LEEDMDDVESSEEEEEEDE) the composition is skewed to acidic residues. The segment covering 203 to 224 (KLERVPSPDHRRRSYRDLDKPR) has biased composition (basic and acidic residues). Basic residues-rich tracts occupy residues 225–294 (RSPA…RSHS) and 301–312 (KKSHKKSRRGNE).

It belongs to the PRP38 family. In terms of assembly, component of the spliceosome B complex. Interacts (via N-terminal interaction domain) with ZMAT2 and MFAP1.

The protein localises to the nucleus. In terms of biological role, involved in pre-mRNA splicing as a component of the spliceosome. This Mus musculus (Mouse) protein is Pre-mRNA-splicing factor 38A (Prpf38a).